The following is a 1016-amino-acid chain: Rho family-interacting cell polarization regulator 2 (1016 aa).

2 positions are modified to phosphoserine: Ser21 and Ser37. Residues 44–73 (AVKKPQAKLKKMHNLGHKNSSPPKEPQPKR) are disordered. Residues 48 to 59 (PQAKLKKMHNLG) show a composition bias toward basic residues. Residues 55 to 113 (MHNLGHKNSSPPKEPQPKRVEEVYRALKNGLDEYLEVHQTELDKLTTQLKDMRRNSRLG) form an involved in cell filopodia formation region. A coiled-coil region spans residues 85–112 (LDEYLEVHQTELDKLTTQLKDMRRNSRL). A Phosphoserine modification is found at Ser341. Positions 414–428 (TSTELPPGSQSSQNE) are enriched in polar residues. The segment at 414–469 (TSTELPPGSQSSQNEGLKDSSSASCSSSSREGSEPRPHPEGETQGLGKPEGCPVAT) is disordered. Residues 433–442 (SSSASCSSSS) show a composition bias toward low complexity. A compositionally biased stretch (basic and acidic residues) spans 444-454 (EGSEPRPHPEG). Residues Ser520 and Ser532 each carry the phosphoserine modification. The interval 636–656 (DSVFSDTETEKNSYRSVHPEA) is disordered. Over residues 643 to 656 (ETEKNSYRSVHPEA) the composition is skewed to basic and acidic residues.

It belongs to the RIPOR family. In terms of assembly, homooligomer; homooligomerization is regulated by RHOC and leads to the formation of concatemers through the association of N- and C-termini. Interacts (phosphorylated form) with 14-3-3 proteins; these interactions occur during myogenic cell differentiation and also induces T cell proliferation arrest. Interacts (phosphorylated form) with HDAC6; this interaction occurs during early myogenic differentiation, prevents HDAC6 to deacetylate tubulin and also induces T cell proliferation arrest. Interacts with DYSF; this interaction occurs during early myogenic differentiation. Interacts with MYOF. Interacts (via active GTP- or inactive GDP-bound forms) with RHOA; this interaction is direct, blocks the loading of GTP to RHOA and decreases upon chemokine CCL19 stimulation in primary T lymphocytes. Interacts with RHOC. Interacts (via phosphorylated form) with YWHAB; this interaction occurs in a chemokine-dependent manner and does not compete for binding of RIPOR2 with RHOA nor blocks inhibition of RIPOR2-mediated RHOA activity. Interacts with YWHAE. Interacts with YWHAQ. Phosphorylated. Chemokine-induced phosphorylation in neutrophils occurs in a PKC- and AKT-dependent manner, resulting in RIPOR2 interaction with YWHAB and stabilization. Phosphorylated by PKCA, AKT1 and MAPKAPK1A; in vitro.

The protein resides in the cytoplasm. It localises to the cytoskeleton. It is found in the cell projection. The protein localises to the filopodium. Its subcellular location is the apical cell membrane. The protein resides in the stereocilium. It localises to the stereocilium membrane. Acts as an inhibitor of the small GTPase RHOA and plays several roles in the regulation of myoblast and hair cell differentiation, lymphocyte T proliferation and neutrophil polarization. Plays a role in fetal mononuclear myoblast differentiation by promoting filopodia and myotube formation. Maintains naive T lymphocytes in a quiescent state and prevents chemokine-induced T lymphocyte responses, such as cell adhesion, polarization and migration. Involved also in the regulation of neutrophil polarization, chemotaxis and adhesion. Required for normal development of inner and outer hair cell stereocilia within the cochlea of the inner ear. Plays a role for maintaining the structural organization of the basal domain of stereocilia. Involved in mechanosensory hair cell function. Required for normal hearing. The protein is Rho family-interacting cell polarization regulator 2 of Bos taurus (Bovine).